Consider the following 78-residue polypeptide: Small ribosomal subunit protein bS18 (78 aa).

It belongs to the bacterial ribosomal protein bS18 family. In terms of assembly, part of the 30S ribosomal subunit. Forms a tight heterodimer with protein bS6.

In terms of biological role, binds as a heterodimer with protein bS6 to the central domain of the 16S rRNA, where it helps stabilize the platform of the 30S subunit. In Lactobacillus johnsonii (strain CNCM I-12250 / La1 / NCC 533), this protein is Small ribosomal subunit protein bS18.